A 177-amino-acid polypeptide reads, in one-letter code: Large ribosomal subunit protein uL6 (177 aa).

Lys44 is modified (N6-acetyllysine).

It belongs to the universal ribosomal protein uL6 family. Part of the 50S ribosomal subunit.

This protein binds to the 23S rRNA, and is important in its secondary structure. It is located near the subunit interface in the base of the L7/L12 stalk, and near the tRNA binding site of the peptidyltransferase center. This is Large ribosomal subunit protein uL6 from Escherichia coli O139:H28 (strain E24377A / ETEC).